A 102-amino-acid chain; its full sequence is Small ribosomal subunit protein uS10 (102 aa).

This sequence belongs to the universal ribosomal protein uS10 family. As to quaternary structure, part of the 30S ribosomal subunit.

In terms of biological role, involved in the binding of tRNA to the ribosomes. The polypeptide is Small ribosomal subunit protein uS10 (Clostridium acetobutylicum (strain ATCC 824 / DSM 792 / JCM 1419 / IAM 19013 / LMG 5710 / NBRC 13948 / NRRL B-527 / VKM B-1787 / 2291 / W)).